The sequence spans 64 residues: Large ribosomal subunit protein uL29 (64 aa).

The protein belongs to the universal ribosomal protein uL29 family.

The chain is Large ribosomal subunit protein uL29 from Thiobacillus denitrificans (strain ATCC 25259 / T1).